Reading from the N-terminus, the 433-residue chain is MLRAKHIGKNYSSSLSPVLSPEHKPSLLESQAIGTVATAQANFMRVIVQDVANSVTSDDDNDSSKTGVELLCVVRAVLKKIRRRVLVGDKVLVGSIDWVDRRGMIENVFHRRSEILDPPVANVDHLLVLFSLDQPKLEPFTLTRFLVEAESTRIPLTLALNKTELISEEELETWKIRLRGWNYEPLFCSVGTKDGLDDIAFVLRDQTSVIVGPSGVGKSSLINVLRSNHGGGVVEDENWFEPMLGNKWFDDQRVGEVSSRSGRGKHTTRNVSLLPVSEGGYLADTPGFNQPSLLKVTKHSLAHCFPEIRNMIESEKCGFRDCLHIGEPGCVVKGDWERYPYYLQLLDEIRIREEFQLRTFGTKREDDVRYKVGDMGVKHAEPRLMPKKHRRESRKKTKQTMISELDEFEDEDSDLYIENDPIVQAIENENKRQ.

A disordered region spans residues 1–20 (MLRAKHIGKNYSSSLSPVLS). Residues 113-291 (SEILDPPVAN…LADTPGFNQP (179 aa)) enclose the CP-type G domain. 212 to 220 (GPSGVGKSS) is a GTP binding site. The Zn(2+) site is built by Cys317, Cys322, His324, and Cys330.

It belongs to the TRAFAC class YlqF/YawG GTPase family. RsgA subfamily. Monomer. Associates with 30S ribosomal subunit, binds 16S rRNA. Zn(2+) is required as a cofactor.

The protein localises to the mitochondrion. Functionally, one of several proteins that assist in the late maturation steps of the functional core of the 30S ribosomal subunit. Helps release RbfA from mature subunits. May play a role in the assembly of ribosomal proteins into the subunit. Circularly permuted GTPase that catalyzes slow GTP hydrolysis, GTPase activity is stimulated by the 30S ribosomal subunit. Required for embryo development. The sequence is that of Small ribosomal subunit biogenesis GTPase RsgA 1, mitochondrial from Arabidopsis thaliana (Mouse-ear cress).